A 348-amino-acid chain; its full sequence is Holliday junction branch migration complex subunit RuvB (348 aa).

Positions 1 to 20 (MKPPARMVSPERRSDDVGDT) are disordered. The large ATPase domain (RuvB-L) stretch occupies residues 1 to 183 (MKPPARMVSP…FGIPIRLNFY (183 aa)). Residues leucine 22, arginine 23, glycine 64, lysine 67, threonine 68, threonine 69, 130–132 (EDF), arginine 173, tyrosine 183, and arginine 220 each bind ATP. Mg(2+) is bound at residue threonine 68. A small ATPAse domain (RuvB-S) region spans residues 184–254 (TVEELEGIVT…IADHALSALE (71 aa)). The segment at 257 to 348 (AAGLDAMDRR…FGLFGSEDDA (92 aa)) is head domain (RuvB-H). Arginine 293, arginine 312, and arginine 317 together coordinate DNA.

The protein belongs to the RuvB family. As to quaternary structure, homohexamer. Forms an RuvA(8)-RuvB(12)-Holliday junction (HJ) complex. HJ DNA is sandwiched between 2 RuvA tetramers; dsDNA enters through RuvA and exits via RuvB. An RuvB hexamer assembles on each DNA strand where it exits the tetramer. Each RuvB hexamer is contacted by two RuvA subunits (via domain III) on 2 adjacent RuvB subunits; this complex drives branch migration. In the full resolvosome a probable DNA-RuvA(4)-RuvB(12)-RuvC(2) complex forms which resolves the HJ.

Its subcellular location is the cytoplasm. It catalyses the reaction ATP + H2O = ADP + phosphate + H(+). The RuvA-RuvB-RuvC complex processes Holliday junction (HJ) DNA during genetic recombination and DNA repair, while the RuvA-RuvB complex plays an important role in the rescue of blocked DNA replication forks via replication fork reversal (RFR). RuvA specifically binds to HJ cruciform DNA, conferring on it an open structure. The RuvB hexamer acts as an ATP-dependent pump, pulling dsDNA into and through the RuvAB complex. RuvB forms 2 homohexamers on either side of HJ DNA bound by 1 or 2 RuvA tetramers; 4 subunits per hexamer contact DNA at a time. Coordinated motions by a converter formed by DNA-disengaged RuvB subunits stimulates ATP hydrolysis and nucleotide exchange. Immobilization of the converter enables RuvB to convert the ATP-contained energy into a lever motion, pulling 2 nucleotides of DNA out of the RuvA tetramer per ATP hydrolyzed, thus driving DNA branch migration. The RuvB motors rotate together with the DNA substrate, which together with the progressing nucleotide cycle form the mechanistic basis for DNA recombination by continuous HJ branch migration. Branch migration allows RuvC to scan DNA until it finds its consensus sequence, where it cleaves and resolves cruciform DNA. This chain is Holliday junction branch migration complex subunit RuvB, found in Bradyrhizobium sp. (strain BTAi1 / ATCC BAA-1182).